Here is an 824-residue protein sequence, read N- to C-terminus: 4-methylaminobutanoate oxidase (formaldehyde-forming) (824 aa).

A Pros-8alpha-FAD histidine modification is found at His-67.

Belongs to the GcvT family. It depends on FAD as a cofactor.

The catalysed reaction is 4-(methylamino)butanoate + O2 + H2O = 4-aminobutanoate + formaldehyde + H2O2. It participates in alkaloid degradation; nicotine degradation. Functionally, catalyzes the oxidative demethylation of 4-methylaminobutanoate produced from the pyrrolidine ring of nicotine. To a much lesser extent, can also use sarcosine as substrate, but is not active against dimethylglycine, methylaminopropionitrile, methylaminopropylamine, and alpha-methylaminobutanoate. This chain is 4-methylaminobutanoate oxidase (formaldehyde-forming) (abo), found in Paenarthrobacter nicotinovorans (Arthrobacter nicotinovorans).